A 398-amino-acid polypeptide reads, in one-letter code: S-adenosylmethionine synthase (398 aa).

H15 contributes to the ATP binding site. Position 17 (D17) interacts with Mg(2+). K(+) is bound at residue E43. Residues E56 and Q99 each contribute to the L-methionine site. Positions 99-109 (QSPDIAQGVDT) are flexible loop. ATP is bound by residues 175 to 177 (DGK), 243 to 244 (RF), D252, 258 to 259 (RK), A275, and K279. D252 contributes to the L-methionine binding site. An L-methionine-binding site is contributed by K283.

It belongs to the AdoMet synthase family. In terms of assembly, homotetramer; dimer of dimers. Mg(2+) is required as a cofactor. It depends on K(+) as a cofactor.

It is found in the cytoplasm. It catalyses the reaction L-methionine + ATP + H2O = S-adenosyl-L-methionine + phosphate + diphosphate. The protein operates within amino-acid biosynthesis; S-adenosyl-L-methionine biosynthesis; S-adenosyl-L-methionine from L-methionine: step 1/1. In terms of biological role, catalyzes the formation of S-adenosylmethionine (AdoMet) from methionine and ATP. The overall synthetic reaction is composed of two sequential steps, AdoMet formation and the subsequent tripolyphosphate hydrolysis which occurs prior to release of AdoMet from the enzyme. This chain is S-adenosylmethionine synthase, found in Parafrankia sp. (strain EAN1pec).